A 312-amino-acid polypeptide reads, in one-letter code: Taste receptor type 2 member 9 (312 aa).

Residues 1 to 9 (MPSAIEAIY) lie on the Extracellular side of the membrane. The chain crosses the membrane as a helical span at residues 10-32 (IILIAGELTIGIWGNGFIVLVNC). At 33–52 (IDWLKRRDISLIDIILISLA) the chain is on the cytoplasmic side. The helical transmembrane segment at 53–72 (ISRICLLCVISLDGFFMLLF) threads the bilayer. Residues 73-86 (PGTYGNSVLVSIVN) lie on the Extracellular side of the membrane. A helical membrane pass occupies residues 87 to 109 (VVWTFANNSSLWFTSCLSIFYLL). Residues 110–128 (KIANISHPFFFWLKLKINK) lie on the Cytoplasmic side of the membrane. A helical transmembrane segment spans residues 129–146 (VMLAILLGSFLISLIISV). Residues 147-180 (PKNDDMWYHLFKVSHEENITWKFKVSKIPGTFKQ) lie on the Extracellular side of the membrane. Asparagine 164 carries an N-linked (GlcNAc...) asparagine glycan. The chain crosses the membrane as a helical span at residues 181–203 (LTLNLGVMVPFILCLISFFLLLF). Topologically, residues 204-234 (SLVRHTKQIRLHATGFRDPSTEAHMRAIKAV) are cytoplasmic. Residues 235–257 (IIFLLLLIVYYPVFLVMTSSALI) form a helical membrane-spanning segment. Residues 258-261 (PQGK) lie on the Extracellular side of the membrane. Residues 262–284 (LVLMIGDIVTVIFPSSHSFILIM) traverse the membrane as a helical segment. The Cytoplasmic portion of the chain corresponds to 285–312 (GNSKLREAFLKMLRFVKCFLRRRKPFVP).

It belongs to the G-protein coupled receptor T2R family. As to expression, expressed in subsets of taste receptor cells of the tongue and palate epithelium and exclusively in gustducin-positive cells.

It is found in the membrane. Gustducin-coupled receptor implicated in the perception of bitter compounds in the oral cavity and the gastrointestinal tract. Signals through PLCB2 and the calcium-regulated cation channel TRPM5. The chain is Taste receptor type 2 member 9 (TAS2R9) from Homo sapiens (Human).